The sequence spans 215 residues: Urease accessory protein UreG 2 (215 aa).

11–18 (GPVGSGKT) lines the GTP pocket.

The protein belongs to the SIMIBI class G3E GTPase family. UreG subfamily. Homodimer. UreD, UreF and UreG form a complex that acts as a GTP-hydrolysis-dependent molecular chaperone, activating the urease apoprotein by helping to assemble the nickel containing metallocenter of UreC. The UreE protein probably delivers the nickel.

The protein resides in the cytoplasm. Facilitates the functional incorporation of the urease nickel metallocenter. This process requires GTP hydrolysis, probably effectuated by UreG. This chain is Urease accessory protein UreG 2, found in Methylorubrum extorquens (strain PA1) (Methylobacterium extorquens).